A 321-amino-acid chain; its full sequence is MHGRAYLLLHRDFCDLKENNYKGITAKPVSEDMMEWEVEIEGLQNSVWQGLVFQLTIHFTSEYNYAPPVVKFITIPFHPNVDPHTGQPCIDFLDNPEKWNTNYTLSSILLALQVMLSNPVLENPVNLEAARILVKDESLYRTILRLFNRPLQMKDDSQELPKDPRKCIRPIKTTSFSDYYQTWSRIATSKATEYYRTPLLKVPNFIGQYYKWKKMDLQHQKEWNLKYSVIKCWLARKRMPHEVTHSMEEIKLCPTLIPTTDEIFLESPTAINSITDIYETEEEGWKSDTSLYENDTDEPREEEVEDLISWTNTLNTNTSED.

The UBC core domain occupies 4 to 153; sequence RAYLLLHRDF…LRLFNRPLQM (150 aa). Cys89 (glycyl thioester intermediate) is an active-site residue. Residues 285–321 form a disordered region; the sequence is WKSDTSLYENDTDEPREEEVEDLISWTNTLNTNTSED. Residues 294–306 are compositionally biased toward acidic residues; sequence NDTDEPREEEVED. Residues 309 to 321 are compositionally biased toward polar residues; the sequence is SWTNTLNTNTSED.

The protein belongs to the ubiquitin-conjugating enzyme family. Post-translationally, autoubiquitinated in vitro in the presence of UBR5.

It catalyses the reaction S-ubiquitinyl-[E1 ubiquitin-activating enzyme]-L-cysteine + [E2 ubiquitin-conjugating enzyme]-L-cysteine = [E1 ubiquitin-activating enzyme]-L-cysteine + S-ubiquitinyl-[E2 ubiquitin-conjugating enzyme]-L-cysteine.. The protein operates within protein modification; protein ubiquitination. Functionally, catalyzes the covalent attachment of ubiquitin to other proteins. This Homo sapiens (Human) protein is Ubiquitin-conjugating enzyme E2 U (UBE2U).